The primary structure comprises 230 residues: Large ribosomal subunit protein uL1 (230 aa).

It belongs to the universal ribosomal protein uL1 family. In terms of assembly, part of the 50S ribosomal subunit.

Its function is as follows. Binds directly to 23S rRNA. The L1 stalk is quite mobile in the ribosome, and is involved in E site tRNA release. Functionally, protein L1 is also a translational repressor protein, it controls the translation of the L11 operon by binding to its mRNA. In Oenococcus oeni (strain ATCC BAA-331 / PSU-1), this protein is Large ribosomal subunit protein uL1.